A 29-amino-acid polypeptide reads, in one-letter code: Cyclotide mela-1 (29 aa).

Positions glycine 1 to aspartate 29 form a cross-link, cyclopeptide (Gly-Asp). 3 disulfide bridges follow: cysteine 5–cysteine 19, cysteine 9–cysteine 21, and cysteine 14–cysteine 26.

In terms of processing, this is a cyclic peptide. Contains 3 disulfide bonds.

Its function is as follows. Probably participates in a plant defense mechanism (Potential). Binds to and induces leakage in phospholipd membranes, particularly ones containing 1-palmitoyl-2-oleophosphatidylethanolamine (POPE). In vitro, displays cytotoxicity against cultured cells but no hemolytic activity towards fresh erythrocytes. Not active against Gram-negative bacterium E.coli ATCC 25922 or Gram-positive bacterium S.aureus ATCC 25923 up to a concentration of 64 uM. This chain is Cyclotide mela-1, found in Melicytus latifolius (Norfolk Island mahoe).